The chain runs to 142 residues: Large ribosomal subunit protein uL11 (142 aa).

The protein belongs to the universal ribosomal protein uL11 family. In terms of assembly, part of the ribosomal stalk of the 50S ribosomal subunit. Interacts with L10 and the large rRNA to form the base of the stalk. L10 forms an elongated spine to which L12 dimers bind in a sequential fashion forming a multimeric L10(L12)X complex. Post-translationally, one or more lysine residues are methylated.

In terms of biological role, forms part of the ribosomal stalk which helps the ribosome interact with GTP-bound translation factors. This chain is Large ribosomal subunit protein uL11, found in Shewanella loihica (strain ATCC BAA-1088 / PV-4).